Consider the following 104-residue polypeptide: L-rhamnose mutarotase (104 aa).

Y18 contacts substrate. The Proton donor role is filled by H22. Substrate-binding positions include Y41 and 76–77 (WW).

Belongs to the rhamnose mutarotase family. As to quaternary structure, homodimer.

It is found in the cytoplasm. The catalysed reaction is alpha-L-rhamnose = beta-L-rhamnose. Its pathway is carbohydrate metabolism; L-rhamnose metabolism. In terms of biological role, involved in the anomeric conversion of L-rhamnose. The sequence is that of L-rhamnose mutarotase from Cronobacter sakazakii (strain ATCC BAA-894) (Enterobacter sakazakii).